The primary structure comprises 1101 residues: Selenocysteine insertion sequence-binding protein 2-like (1101 aa).

5 disordered regions span residues 154-206 (LGQV…AGPD), 240-295 (LWKS…PDSG), 320-387 (QKKP…SESL), 884-1010 (TSDG…ISVE), and 1030-1101 (TLQL…TQTT). Positions 255-265 (AESSSEQGASE) are enriched in low complexity. Residue S276 is modified to Phosphoserine. The span at 327–346 (KNQTFSRGGRQTEQRNNSQV) shows a compositional bias: polar residues. Composition is skewed to basic and acidic residues over residues 356–371 (SSER…DNKH) and 892–908 (ENEK…EKPS). The span at 925 to 939 (ATGSTTSATSAGKST) shows a compositional bias: low complexity. Over residues 940-950 (ASDKEEVKPDD) the composition is skewed to basic and acidic residues. A compositionally biased stretch (polar residues) spans 954–964 (ASQQSTETGSL). Residues 988-1002 (LEEEEDEDEEEEEDY) show a composition bias toward acidic residues. Residues 1030 to 1039 (TLQLGKTLNG) are compositionally biased toward polar residues. Residues 1040 to 1057 (SEEDNVEQSGEEEAEAPE) show a composition bias toward acidic residues. Over residues 1070 to 1087 (ADQQASPGQQKSSNCSSL) the composition is skewed to polar residues.

Functionally, binds SECIS (Sec insertion sequence) elements present on selenocysteine (Sec) protein mRNAs, but does not promote Sec incorporation into selenoproteins in vitro. The polypeptide is Selenocysteine insertion sequence-binding protein 2-like (SECISBP2L) (Homo sapiens (Human)).